A 137-amino-acid polypeptide reads, in one-letter code: MLQPKRTKFRKQFTGKNRGLAFSGGKVSFGEYALRAQDRGRLTARQIEAARRAMTRHIKRGGKIWIRVFPDVPVTKKPLEVRMGKGKGNVEYWVCKVQPGRILYEMEGVSEEIAREAFKLAAAKLPIKTQFVTRTVM.

This sequence belongs to the universal ribosomal protein uL16 family. In terms of assembly, part of the 50S ribosomal subunit.

Functionally, binds 23S rRNA and is also seen to make contacts with the A and possibly P site tRNAs. In Thioalkalivibrio sulfidiphilus (strain HL-EbGR7), this protein is Large ribosomal subunit protein uL16.